The following is a 188-amino-acid chain: RWD domain-containing protein 4 (188 aa).

The region spanning 9–111 (MELEALRSIY…EYAKDHKEQF (103 aa)) is the RWD domain. A disordered region spans residues 132–167 (TPTTAPSSKKKEKKEQLSKAQKRKLADKTDHKGELP). Residues 155–166 (KLADKTDHKGEL) are compositionally biased toward basic and acidic residues.

This is RWD domain-containing protein 4 (Rwdd4) from Mus musculus (Mouse).